Here is a 785-residue protein sequence, read N- to C-terminus: Endonuclease MutS2 (785 aa).

335-342 (GPNTGGKT) is a binding site for ATP. Positions 710–785 (LDLRGERYEN…GSGVTIVELK (76 aa)) constitute a Smr domain.

It belongs to the DNA mismatch repair MutS family. MutS2 subfamily. As to quaternary structure, homodimer. Binds to stalled ribosomes, contacting rRNA.

Endonuclease that is involved in the suppression of homologous recombination and thus may have a key role in the control of bacterial genetic diversity. Its function is as follows. Acts as a ribosome collision sensor, splitting the ribosome into its 2 subunits. Detects stalled/collided 70S ribosomes which it binds and splits by an ATP-hydrolysis driven conformational change. Acts upstream of the ribosome quality control system (RQC), a ribosome-associated complex that mediates the extraction of incompletely synthesized nascent chains from stalled ribosomes and their subsequent degradation. Probably generates substrates for RQC. The polypeptide is Endonuclease MutS2 (Bacillus velezensis (strain DSM 23117 / BGSC 10A6 / LMG 26770 / FZB42) (Bacillus amyloliquefaciens subsp. plantarum)).